Reading from the N-terminus, the 821-residue chain is TORTIFOLIA1-like protein 1 (821 aa).

HEAT repeat units follow at residues 69 to 110 (PDSP…SYTD), 114 to 151 (SQLAKIISHIVKRLKDADNGVRDACRDAIGSLSAQFLK), 163 to 201 (SSLVGLFAKPLFEAMAEQNKSLQSGAAICMGKMIDSATE), 205 to 242 (AAFQKLCPRISKLLNSPNYITKASLLPVVGSLSQVGAI), and 245 to 282 (QSLESLLHSIHECLGCTNWVTRKAAADVLISLAVHSSS). Position 406 is a phosphoserine (S406). 2 disordered regions span residues 416–437 (PSRQKNSSNSNTEDESDANTSV) and 553–610 (MSIQ…RAWD). Residues 501 to 554 (PPLQRQLLHLERQQTHIMNMLQDFMGGSHDGMISLENRVRGLERIVEEMSREMS) adopt a coiled-coil conformation. A compositionally biased stretch (polar residues) spans 579 to 590 (YGPSSRNTQTST).

In terms of tissue distribution, expressed at low levels in roots, hypocotyls, stems, flowers, siliques, cotyledons, and leaves. Particularly present in hydathodes of cotyledons and root hairs.

It localises to the cytoplasm. The protein resides in the cytoskeleton. In terms of biological role, plant-specific microtubule-associated protein (MAP) that regulates the orientation of cortical microtubules and the direction of organ growth. This is TORTIFOLIA1-like protein 1 from Arabidopsis thaliana (Mouse-ear cress).